Here is a 300-residue protein sequence, read N- to C-terminus: Dihydroorotate dehydrogenase B (NAD(+)), catalytic subunit (300 aa).

Residues S20 and 44 to 45 (KG) contribute to the FMN site. Residues K44 and 68-72 (NAIGL) contribute to the substrate site. N98 and N125 together coordinate FMN. N125 is a binding site for substrate. Catalysis depends on C128, which acts as the Nucleophile. The FMN site is built by K163 and I189. 190-191 (NT) contributes to the substrate binding site. FMN-binding positions include G215, 241–242 (GG), and 263–264 (GT).

It belongs to the dihydroorotate dehydrogenase family. Type 1 subfamily. As to quaternary structure, heterotetramer of 2 PyrK and 2 PyrD type B subunits. It depends on FMN as a cofactor.

It localises to the cytoplasm. The catalysed reaction is (S)-dihydroorotate + NAD(+) = orotate + NADH + H(+). Its pathway is pyrimidine metabolism; UMP biosynthesis via de novo pathway; orotate from (S)-dihydroorotate (NAD(+) route): step 1/1. Functionally, catalyzes the conversion of dihydroorotate to orotate with NAD(+) as electron acceptor. The sequence is that of Dihydroorotate dehydrogenase B (NAD(+)), catalytic subunit (pyrD) from Lachnoclostridium phytofermentans (strain ATCC 700394 / DSM 18823 / ISDg) (Clostridium phytofermentans).